A 349-amino-acid polypeptide reads, in one-letter code: tRNA pseudouridine synthase D (349 aa).

Phe-26 contributes to the substrate binding site. Residue Asp-79 is the Nucleophile of the active site. Asn-128 is a substrate binding site. Residues 154 to 302 (GVPNYFGSQR…VEGSRRAVLL (149 aa)) form the TRUD domain. Position 328 (Phe-328) interacts with substrate.

It belongs to the pseudouridine synthase TruD family.

The catalysed reaction is uridine(13) in tRNA = pseudouridine(13) in tRNA. In terms of biological role, responsible for synthesis of pseudouridine from uracil-13 in transfer RNAs. This is tRNA pseudouridine synthase D from Yersinia pseudotuberculosis serotype IB (strain PB1/+).